Reading from the N-terminus, the 129-residue chain is Follitropin subunit beta (129 aa).

The first 20 residues, 1–20, serve as a signal peptide directing secretion; it reads MKTLQFFFLFCCWKAICCNS. 6 cysteine pairs are disulfide-bonded: Cys21-Cys69, Cys35-Cys84, Cys38-Cys122, Cys46-Cys100, Cys50-Cys102, and Cys105-Cys112. 2 N-linked (GlcNAc...) asparagine glycosylation sites follow: Asn25 and Asn42.

The protein belongs to the glycoprotein hormones subunit beta family. Heterodimer. The active follitropin is a heterodimer composed of an alpha chain/CGA shared with other hormones and a unique beta chain/FSHB shown here.

Its subcellular location is the secreted. Together with the alpha chain CGA constitutes follitropin, the follicle-stimulating hormone, and provides its biological specificity to the hormone heterodimer. Binds FSHR, a G protein-coupled receptor, on target cells to activate downstream signaling pathways. Follitropin is involved in follicle development and spermatogenesis in reproductive organs. The polypeptide is Follitropin subunit beta (FSHB) (Gorilla gorilla gorilla (Western lowland gorilla)).